Here is a 374-residue protein sequence, read N- to C-terminus: Chaperone protein DnaJ (374 aa).

Residues 5–70 (DYYEVLGVER…SKRAAFDQYG (66 aa)) form the J domain. The segment at 133–211 (GTTVSIRVPT…CHGEGRVEEY (79 aa)) adopts a CR-type zinc-finger fold. Residues C146, C149, C163, C166, C185, C188, C199, and C202 each contribute to the Zn(2+) site. CXXCXGXG motif repeat units lie at residues 146-153 (CQPCDGSG), 163-170 (CPTCGGIG), 185-192 (CPRCHGQG), and 199-206 (CTSCHGEG).

It belongs to the DnaJ family. As to quaternary structure, homodimer. Zn(2+) serves as cofactor.

It is found in the cytoplasm. Participates actively in the response to hyperosmotic and heat shock by preventing the aggregation of stress-denatured proteins and by disaggregating proteins, also in an autonomous, DnaK-independent fashion. Unfolded proteins bind initially to DnaJ; upon interaction with the DnaJ-bound protein, DnaK hydrolyzes its bound ATP, resulting in the formation of a stable complex. GrpE releases ADP from DnaK; ATP binding to DnaK triggers the release of the substrate protein, thus completing the reaction cycle. Several rounds of ATP-dependent interactions between DnaJ, DnaK and GrpE are required for fully efficient folding. Also involved, together with DnaK and GrpE, in the DNA replication of plasmids through activation of initiation proteins. In Pseudomonas putida (strain GB-1), this protein is Chaperone protein DnaJ.